The chain runs to 188 residues: UPF0232 protein RHA1_ro03670 (188 aa).

Disordered stretches follow at residues 1 to 20 (MTDDLEPTAPAAAAPEPEVK), 31 to 78 (EARA…QPFG), and 166 to 188 (PTAPSWRKGERHIRGRGPRDTYG). Over residues 7-16 (PTAPAAAAPE) the composition is skewed to low complexity.

This sequence belongs to the UPF0232 family.

This chain is UPF0232 protein RHA1_ro03670, found in Rhodococcus jostii (strain RHA1).